Consider the following 31-residue polypeptide: Bacteriocin lactocin-705 (31 aa).

Its function is as follows. Antibacterial activity against several lactic acid bacteria, Listeria, Streptococci, etc. The chain is Bacteriocin lactocin-705 from Lacticaseibacillus paracasei (Lactobacillus paracasei).